Reading from the N-terminus, the 1454-residue chain is Probable cleavage and polyadenylation specificity factor subunit 1 (1454 aa).

The tract at residues lysine 736–proline 765 is disordered.

Belongs to the CPSF1 family. CPSF is a heterotetramer composed of four distinct subunits 160 (cpsf-1), 100 (cpsf-2), 70 (cpsf-3), and 30 kDa (cpsf-4).

It localises to the nucleus. CPSF plays a key role in pre-mRNA 3'-end formation, recognizing the AAUAAA signal sequence and interacting with poly(A)polymerase and other factors to bring about cleavage and poly(A) addition. This subunit is involved in the RNA recognition step of the polyadenylation reaction. This Caenorhabditis elegans protein is Probable cleavage and polyadenylation specificity factor subunit 1 (cpsf-1).